We begin with the raw amino-acid sequence, 434 residues long: uncharacterized protein (434 aa).

5 helical membrane passes run 27 to 47, 64 to 84, 244 to 264, 289 to 309, and 387 to 407; these read IFLL…QSVI, FYLS…FVNW, IILA…ATVL, VPVN…PSLL, and LILT…GAVF.

The protein belongs to the CbiQ family.

It is found in the cell membrane. This is an uncharacterized protein from Mycoplasma pneumoniae (strain ATCC 29342 / M129 / Subtype 1) (Mycoplasmoides pneumoniae).